A 258-amino-acid polypeptide reads, in one-letter code: UPF0246 protein YaaA (258 aa).

Belongs to the UPF0246 family.

This Escherichia coli O45:K1 (strain S88 / ExPEC) protein is UPF0246 protein YaaA.